Consider the following 422-residue polypeptide: Phagosome assembly factor 1 (422 aa).

Belongs to the PHAF1 family. In terms of assembly, interacts with BCAS3; the interaction is requrired for the association with the phagophore.

The protein localises to the cytoplasm. Its subcellular location is the preautophagosomal structure. Its function is as follows. Plays a regulatory role in autophagic activity. In complex with BCAS3, associates with the autophagosome formation site during both non-selective and selective autophagy. In Mus musculus (Mouse), this protein is Phagosome assembly factor 1.